A 343-amino-acid polypeptide reads, in one-letter code: tRNA N6-adenosine threonylcarbamoyltransferase (343 aa).

His-115 and His-119 together coordinate Fe cation. Substrate-binding positions include 137 to 141, Asp-170, Gly-183, Asp-187, and Asn-276; that span reads LVSGG. Asp-306 is a Fe cation binding site.

Belongs to the KAE1 / TsaD family. It depends on Fe(2+) as a cofactor.

It is found in the cytoplasm. The enzyme catalyses L-threonylcarbamoyladenylate + adenosine(37) in tRNA = N(6)-L-threonylcarbamoyladenosine(37) in tRNA + AMP + H(+). Functionally, required for the formation of a threonylcarbamoyl group on adenosine at position 37 (t(6)A37) in tRNAs that read codons beginning with adenine. Is involved in the transfer of the threonylcarbamoyl moiety of threonylcarbamoyl-AMP (TC-AMP) to the N6 group of A37, together with TsaE and TsaB. TsaD likely plays a direct catalytic role in this reaction. In Limosilactobacillus reuteri (strain DSM 20016) (Lactobacillus reuteri), this protein is tRNA N6-adenosine threonylcarbamoyltransferase.